The chain runs to 90 residues: Probable Fe(2+)-trafficking protein (90 aa).

Belongs to the Fe(2+)-trafficking protein family.

Its function is as follows. Could be a mediator in iron transactions between iron acquisition and iron-requiring processes, such as synthesis and/or repair of Fe-S clusters in biosynthetic enzymes. The polypeptide is Probable Fe(2+)-trafficking protein (Nitrosomonas eutropha (strain DSM 101675 / C91 / Nm57)).